The sequence spans 77 residues: uncharacterized protein (77 aa).

Residues 54–77 (HHGRKHKEDMEARHEQLTKGGTIL) are disordered. The segment covering 59-70 (HKEDMEARHEQL) has biased composition (basic and acidic residues).

This is an uncharacterized protein from Escherichia coli O157:H7.